A 191-amino-acid polypeptide reads, in one-letter code: Probable GTP-binding protein EngB (191 aa).

The 177-residue stretch at 13 to 189 (DRLEVAFAGR…RAEIVALLPD (177 aa)) folds into the EngB-type G domain. GTP contacts are provided by residues 21 to 28 (GRSNVGKS), 48 to 52 (GRTRE), 67 to 70 (DLPG), 134 to 137 (TKTD), and 168 to 170 (TSS). Mg(2+)-binding residues include S28 and T50.

Belongs to the TRAFAC class TrmE-Era-EngA-EngB-Septin-like GTPase superfamily. EngB GTPase family. The cofactor is Mg(2+).

Functionally, necessary for normal cell division and for the maintenance of normal septation. The protein is Probable GTP-binding protein EngB of Maricaulis maris (strain MCS10) (Caulobacter maris).